The following is a 413-amino-acid chain: Alpha-1-antitrypsin-like protein GS55-LT (413 aa).

An N-terminal signal peptide occupies residues 1–21 (MPSSISWGLLLLAGLSCLATG). Residues Asn65, Asn102, and Asn123 are each glycosylated (N-linked (GlcNAc...) asparagine). Residues 368-387 (RHTVKGPMALTLAPEVKFNR) form an RCL region.

This sequence belongs to the serpin family.

Its subcellular location is the secreted. Functionally, inhibitor of serine proteases. This Ictidomys tridecemlineatus (Thirteen-lined ground squirrel) protein is Alpha-1-antitrypsin-like protein GS55-LT.